The following is a 431-amino-acid chain: O-methyltransferase xanE (431 aa).

D283 provides a ligand contact to S-adenosyl-L-methionine. The active-site Proton acceptor is H330.

Belongs to the class I-like SAM-binding methyltransferase superfamily. Cation-independent O-methyltransferase family.

The protein operates within secondary metabolite biosynthesis. O-methyltransferase; part of the gene cluster that mediates the biosynthesis of the isocyanide xanthocillin and its derivatives. The first step of the pathway consists in the conversion of tyrosine into a vinyl-isonitrile intermediate by the isocyanide synthase xanB. Subsequent oxidative dimerization of this intermediate to form xanthocillin may involve the cytochrome P450 monooxygenase xanG, whose expression is coregulated with that of XanB. Xanthocillin can be further modified by the isonitrile hydratase-like protein xanA which introduces N-formyl groups and the methyltransferase xanE which introduces methyl groups, leading to the production of several derivatives including fumiformamide. Finally, fumiformamide can be subject to both oxidative and reductive cyclization to yield melanocins E and F, respectively. The polypeptide is O-methyltransferase xanE (Aspergillus fumigatus (strain ATCC MYA-4609 / CBS 101355 / FGSC A1100 / Af293) (Neosartorya fumigata)).